A 126-amino-acid chain; its full sequence is Aspartate 1-decarboxylase (126 aa).

S25 (schiff-base intermediate with substrate; via pyruvic acid) is an active-site residue. The residue at position 25 (S25) is a Pyruvic acid (Ser). T57 is a binding site for substrate. The active-site Proton donor is the Y58. Substrate is bound at residue 73-75 (GAA).

It belongs to the PanD family. In terms of assembly, heterooctamer of four alpha and four beta subunits. Requires pyruvate as cofactor. In terms of processing, is synthesized initially as an inactive proenzyme, which is activated by self-cleavage at a specific serine bond to produce a beta-subunit with a hydroxyl group at its C-terminus and an alpha-subunit with a pyruvoyl group at its N-terminus.

It localises to the cytoplasm. The enzyme catalyses L-aspartate + H(+) = beta-alanine + CO2. Its pathway is cofactor biosynthesis; (R)-pantothenate biosynthesis; beta-alanine from L-aspartate: step 1/1. In terms of biological role, catalyzes the pyruvoyl-dependent decarboxylation of aspartate to produce beta-alanine. This Cronobacter sakazakii (strain ATCC BAA-894) (Enterobacter sakazakii) protein is Aspartate 1-decarboxylase.